The chain runs to 491 residues: Glutamyl-tRNA(Gln) amidotransferase subunit A (491 aa).

Active-site charge relay system residues include lysine 81 and serine 156. Serine 180 (acyl-ester intermediate) is an active-site residue.

Belongs to the amidase family. GatA subfamily. As to quaternary structure, heterotrimer of A, B and C subunits.

It carries out the reaction L-glutamyl-tRNA(Gln) + L-glutamine + ATP + H2O = L-glutaminyl-tRNA(Gln) + L-glutamate + ADP + phosphate + H(+). Allows the formation of correctly charged Gln-tRNA(Gln) through the transamidation of misacylated Glu-tRNA(Gln) in organisms which lack glutaminyl-tRNA synthetase. The reaction takes place in the presence of glutamine and ATP through an activated gamma-phospho-Glu-tRNA(Gln). In Alcanivorax borkumensis (strain ATCC 700651 / DSM 11573 / NCIMB 13689 / SK2), this protein is Glutamyl-tRNA(Gln) amidotransferase subunit A.